The primary structure comprises 1266 residues: Kinesin-like protein KIN-12G (1266 aa).

The disordered stretch occupies residues 1 to 22 (MPSDCGDDDHGGGSAPAGFELQ). The Kinesin motor domain maps to 32-369 (NVQVVIRVRP…LKFAQRAKYI (338 aa)). 113–120 (GQTGSGKT) contributes to the ATP binding site. Coiled-coil stretches lie at residues 613 to 668 (MEFI…SEAV), 817 to 854 (RSEL…FKRK), 1029 to 1060 (ARES…AERV), and 1084 to 1120 (SELL…MNRH).

Belongs to the TRAFAC class myosin-kinesin ATPase superfamily. Kinesin family. KIN-12 subfamily.

In Oryza sativa subsp. japonica (Rice), this protein is Kinesin-like protein KIN-12G.